A 420-amino-acid polypeptide reads, in one-letter code: Fasciclin-like arabinogalactan protein 4 (420 aa).

An N-terminal signal peptide occupies residues 1 to 28 (MANVISISHFTLLALPYLLLLLSSTAAA). 2 consecutive FAS1 domains span residues 29–177 (INVT…DSLI) and 205–351 (GINL…SKVL). 8 N-linked (GlcNAc...) asparagine glycosylation sites follow: Asn-30, Asn-40, Asn-135, Asn-154, Asn-167, Asn-207, Asn-312, and Asn-317. The segment at 360 to 388 (SGQPVATAPPQEISLSPESSSEQPSRLVS) is disordered. The segment covering 368-384 (PPQEISLSPESSSEQPS) has biased composition (low complexity). The GPI-anchor amidated serine moiety is linked to residue Ser-396. A propeptide spans 397–420 (GAVKRPLGFLVLWCWCIAFCYVLV) (removed in mature form).

Belongs to the fasciclin-like AGP family. In terms of tissue distribution, expressed in all plant organs and tissues, including guard cells in the leaf.

The protein resides in the cell membrane. May be a cell surface adhesion protein that is required for normal cell expansion. The chain is Fasciclin-like arabinogalactan protein 4 (FLA4) from Arabidopsis thaliana (Mouse-ear cress).